The following is a 750-amino-acid chain: Photosystem I P700 chlorophyll a apoprotein A1 (750 aa).

The next 8 membrane-spanning stretches (helical) occupy residues 70-93, 156-179, 195-219, 291-309, 346-369, 385-411, 433-455, and 531-549; these read VFSA…FHGA, LYCT…FHYH, LNHH…HVSL, IAHH…GHMY, WHAQ…HHMY, LSLF…IFMV, AIIS…LYIH, and FLVH…LILL. [4Fe-4S] cluster contacts are provided by cysteine 573 and cysteine 582. A run of 2 helical transmembrane segments spans residues 589 to 610 and 664 to 686; these read HVFL…HFSW and LSAY…MFLF. Histidine 675 is a chlorophyll a' binding site. Methionine 683 and tyrosine 691 together coordinate chlorophyll a. Tryptophan 692 is a binding site for phylloquinone. The helical transmembrane segment at 724 to 744 threads the bilayer; that stretch reads AVGVTHYLLGGIATTWAFFLA.

The protein belongs to the PsaA/PsaB family. As to quaternary structure, the PsaA/B heterodimer binds the P700 chlorophyll special pair and subsequent electron acceptors. PSI consists of a core antenna complex that captures photons, and an electron transfer chain that converts photonic excitation into a charge separation. The eukaryotic PSI reaction center is composed of at least 11 subunits. The cofactor is P700 is a chlorophyll a/chlorophyll a' dimer, A0 is one or more chlorophyll a, A1 is one or both phylloquinones and FX is a shared 4Fe-4S iron-sulfur center..

The protein localises to the plastid. The protein resides in the chloroplast thylakoid membrane. It catalyses the reaction reduced [plastocyanin] + hnu + oxidized [2Fe-2S]-[ferredoxin] = oxidized [plastocyanin] + reduced [2Fe-2S]-[ferredoxin]. PsaA and PsaB bind P700, the primary electron donor of photosystem I (PSI), as well as the electron acceptors A0, A1 and FX. PSI is a plastocyanin-ferredoxin oxidoreductase, converting photonic excitation into a charge separation, which transfers an electron from the donor P700 chlorophyll pair to the spectroscopically characterized acceptors A0, A1, FX, FA and FB in turn. Oxidized P700 is reduced on the lumenal side of the thylakoid membrane by plastocyanin. In Morus indica (Mulberry), this protein is Photosystem I P700 chlorophyll a apoprotein A1.